Consider the following 613-residue polypeptide: Glutaminase 1 (613 aa).

The interval 33–315 (GAVADYIPEL…LSSHYDLHML (283 aa)) is glutaminase. 7 residues coordinate substrate: serine 75, asparagine 124, glutamate 168, asparagine 175, tyrosine 199, tyrosine 251, and valine 269. Positions 345 to 457 (REILAAHEQE…LDTAIEWAED (113 aa)) constitute an STAS domain. Residue 480 to 595 (LLEGLSADEL…ERIMRNLAQL (116 aa)) coordinates a nucleoside 3',5'-cyclic phosphate.

Belongs to the glutaminase family. Homotetramer.

It carries out the reaction L-glutamine + H2O = L-glutamate + NH4(+). This is Glutaminase 1 (glsA1) from Bradyrhizobium diazoefficiens (strain JCM 10833 / BCRC 13528 / IAM 13628 / NBRC 14792 / USDA 110).